A 540-amino-acid chain; its full sequence is MLO protein homolog 1 (540 aa).

Residues 1–16 lie on the Extracellular side of the membrane; the sequence is MAGGRSGSRELPETPT. A helical membrane pass occupies residues 17–37; the sequence is WAVAVVCAVLVLVSAAMEHGL. Residues 38-60 lie on the Cytoplasmic side of the membrane; the sequence is HNLSHWFRRRQKKAMGDALDKIK. A helical membrane pass occupies residues 61–81; the sequence is AELMLLGFISLLLTVAQAPIS. Residues 82-142 lie on the Extracellular side of the membrane; it reads KICIPKSAAN…MSAKSMHQLH (61 aa). The chain crosses the membrane as a helical span at residues 143 to 163; sequence IFIFVLAVFHVTYCIITMGLG. Topologically, residues 164 to 265 are cytoplasmic; the sequence is RLKMKKWKKW…IKRSLEDDFK (102 aa). The helical transmembrane segment at 266–286 threads the bilayer; that stretch reads VVVGISLPLWFVGILVLFLDI. H287 is a topological domain (extracellular). The chain crosses the membrane as a helical span at residues 288–308; the sequence is GLGTLIWISFVPLIIVLLVGT. At 309–347 the chain is on the cytoplasmic side; the sequence is KLEMVIMEMAQEIQDRATVIQGAPMVEPSNKYFWFNRPD. Residues 348–368 traverse the membrane as a helical segment; the sequence is WVLFFIHLTLFHNAFQMAHFV. Residues 369-383 lie on the Extracellular side of the membrane; the sequence is WTMATPGLKKCFHEN. The chain crosses the membrane as a helical span at residues 384-404; that stretch reads IWLSIVEVIVGISLQVLCSYI. Residues 405–540 lie on the Cytoplasmic side of the membrane; the sequence is TFPLYALVTQ…DSDFSFSAQR (136 aa). Positions 426 to 447 are calmodulin-binding; that stretch reads EQTMKALMNWRKKAMEKKKVRD. Positions 468 to 526 are disordered; it reads ASPVHLLQDHRARSDDPPSPITVASPPAPEEDMYPVPAAAASRQLLDDPPDRRWMASSS. Composition is skewed to basic and acidic residues over residues 474 to 483 and 512 to 521; these read LQDHRARSDD and LLDDPPDRRW.

The protein belongs to the MLO family.

It localises to the membrane. May be involved in modulation of pathogen defense and leaf cell death. Activity seems to be regulated by Ca(2+)-dependent calmodulin binding and seems not to require heterotrimeric G proteins. This chain is MLO protein homolog 1 (MLO1), found in Oryza sativa subsp. indica (Rice).